Consider the following 300-residue polypeptide: Geranylgeranyl pyrophosphate synthase (300 aa).

Position 1 is an N-acetylmethionine (Met1). Isopentenyl diphosphate contacts are provided by Lys25, Arg28, and His57. Residues Asp64 and Asp68 each contribute to the Mg(2+) site. Dimethylallyl diphosphate is bound at residue Arg73. Residue Arg74 participates in isopentenyl diphosphate binding. The dimethylallyl diphosphate site is built by Lys151, Thr152, Gln185, Lys202, and Lys212.

It belongs to the FPP/GGPP synthase family. In terms of assembly, homohexamer; trimer of homodimers. It depends on Mg(2+) as a cofactor. In terms of tissue distribution, abundantly expressed in testis. Found in other tissues to a lower extent. Expressed in dermal fibroblast and skeletal muscle.

The protein localises to the cytoplasm. The protein resides in the perinuclear region. Its subcellular location is the myofibril. It is found in the sarcomere. It localises to the z line. It catalyses the reaction isopentenyl diphosphate + dimethylallyl diphosphate = (2E)-geranyl diphosphate + diphosphate. The enzyme catalyses isopentenyl diphosphate + (2E)-geranyl diphosphate = (2E,6E)-farnesyl diphosphate + diphosphate. It carries out the reaction isopentenyl diphosphate + (2E,6E)-farnesyl diphosphate = (2E,6E,10E)-geranylgeranyl diphosphate + diphosphate. The protein operates within isoprenoid biosynthesis; farnesyl diphosphate biosynthesis; farnesyl diphosphate from geranyl diphosphate and isopentenyl diphosphate: step 1/1. It functions in the pathway isoprenoid biosynthesis; geranyl diphosphate biosynthesis; geranyl diphosphate from dimethylallyl diphosphate and isopentenyl diphosphate: step 1/1. Its pathway is isoprenoid biosynthesis; geranylgeranyl diphosphate biosynthesis; geranylgeranyl diphosphate from farnesyl diphosphate and isopentenyl diphosphate: step 1/1. With respect to regulation, subject to product inhibition by geranylgeranyl diphosphate. Catalyzes the trans-addition of the three molecules of IPP onto DMAPP to form geranylgeranyl pyrophosphate, an important precursor of carotenoids and geranylated proteins. This Homo sapiens (Human) protein is Geranylgeranyl pyrophosphate synthase (GGPS1).